A 159-amino-acid chain; its full sequence is MPTPKKGPRLGGSASQQKHLLSNMAASLIEHGAIKTTDAKAKVLRPYIEKIITKAKAGTVADRRAVLKLIPHKDVVAYLFDELAPKFENREGGYTRIIKLENRSGDNAPMSQISLVLEETVTSEANRATRAAASKQAEEAKAEEAEATEAEAEETTEEK.

Over residues 124–135 (EANRATRAAASK) the composition is skewed to low complexity. Residues 124–159 (EANRATRAAASKQAEEAKAEEAEATEAEAEETTEEK) form a disordered region. A compositionally biased stretch (acidic residues) spans 145-159 (AEATEAEAEETTEEK).

The protein belongs to the bacterial ribosomal protein bL17 family. In terms of assembly, part of the 50S ribosomal subunit. Contacts protein L32.

The chain is Large ribosomal subunit protein bL17 from Corynebacterium aurimucosum (strain ATCC 700975 / DSM 44827 / CIP 107346 / CN-1) (Corynebacterium nigricans).